A 379-amino-acid chain; its full sequence is Citrate synthase (379 aa).

Catalysis depends on residues H225, H265, and D316.

It belongs to the citrate synthase family. In terms of assembly, homodimer.

The enzyme catalyses oxaloacetate + acetyl-CoA + H2O = citrate + CoA + H(+). The protein operates within carbohydrate metabolism; tricarboxylic acid cycle; isocitrate from oxaloacetate: step 1/2. Might regulate the synthesis and function of enzymes involved in later enzymatic steps of Krebs cycle. The sequence is that of Citrate synthase (citZ) from Haloferax volcanii (strain ATCC 29605 / DSM 3757 / JCM 8879 / NBRC 14742 / NCIMB 2012 / VKM B-1768 / DS2) (Halobacterium volcanii).